The following is a 227-amino-acid chain: uncharacterized protein (227 aa).

The first 25 residues, 1-25, serve as a signal peptide directing secretion; it reads MLIMKKLLLIAATSATMLSSSVSFA.

It to R.conorii RC1281.

This is an uncharacterized protein from Rickettsia conorii (strain ATCC VR-613 / Malish 7).